Here is a 1039-residue protein sequence, read N- to C-terminus: Antigen 43 (1039 aa).

The signal sequence occupies residues 1 to 52; that stretch reads MKRHLNTCYRLVWNHMTGAFVVASELARARGKRGGVAVALSLAAVTSLPVLA. Positions 737–1039 constitute an Autotransporter domain; sequence VNGENNSVRL…NGQATLNVTF (303 aa).

Interaction with TamA of the translocation and assembly module (TAM) initiates insertion in the outer membrane.

It is found in the periplasm. It localises to the secreted. The protein resides in the cell surface. The protein localises to the cell outer membrane. Controls colony form variation and autoaggregation. May function as an adhesin. This chain is Antigen 43 (flu), found in Escherichia coli (strain K12).